Reading from the N-terminus, the 418-residue chain is Gamma-glutamyl phosphate reductase (418 aa).

It belongs to the gamma-glutamyl phosphate reductase family.

It localises to the cytoplasm. The enzyme catalyses L-glutamate 5-semialdehyde + phosphate + NADP(+) = L-glutamyl 5-phosphate + NADPH + H(+). Its pathway is amino-acid biosynthesis; L-proline biosynthesis; L-glutamate 5-semialdehyde from L-glutamate: step 2/2. Catalyzes the NADPH-dependent reduction of L-glutamate 5-phosphate into L-glutamate 5-semialdehyde and phosphate. The product spontaneously undergoes cyclization to form 1-pyrroline-5-carboxylate. The polypeptide is Gamma-glutamyl phosphate reductase (Marinobacter nauticus (strain ATCC 700491 / DSM 11845 / VT8) (Marinobacter aquaeolei)).